Here is a 209-residue protein sequence, read N- to C-terminus: Uracil phosphoribosyltransferase (209 aa).

Residues arginine 79, arginine 104, and 131 to 139 (DPMLATGNS) contribute to the 5-phospho-alpha-D-ribose 1-diphosphate site. Uracil-binding positions include isoleucine 194 and 199-201 (GDA). Aspartate 200 lines the 5-phospho-alpha-D-ribose 1-diphosphate pocket.

Belongs to the UPRTase family. The cofactor is Mg(2+).

The enzyme catalyses UMP + diphosphate = 5-phospho-alpha-D-ribose 1-diphosphate + uracil. It functions in the pathway pyrimidine metabolism; UMP biosynthesis via salvage pathway; UMP from uracil: step 1/1. With respect to regulation, allosterically activated by GTP. In terms of biological role, catalyzes the conversion of uracil and 5-phospho-alpha-D-ribose 1-diphosphate (PRPP) to UMP and diphosphate. This chain is Uracil phosphoribosyltransferase, found in Delftia acidovorans (strain DSM 14801 / SPH-1).